The sequence spans 546 residues: Chaperonin GroEL 2 (546 aa).

ATP-binding positions include 30 to 33 (TLGP), Lys51, 87 to 91 (DGTTT), Gly415, 479 to 481 (NAA), and Asp495. The disordered stretch occupies residues 524-546 (APKDAPPAQPAGVPGAGGTGFDF). Gly residues predominate over residues 537 to 546 (PGAGGTGFDF).

Belongs to the chaperonin (HSP60) family. Forms a cylinder of 14 subunits composed of two heptameric rings stacked back-to-back. Interacts with the co-chaperonin GroES.

The protein resides in the cytoplasm. The enzyme catalyses ATP + H2O + a folded polypeptide = ADP + phosphate + an unfolded polypeptide.. Its function is as follows. Together with its co-chaperonin GroES, plays an essential role in assisting protein folding. The GroEL-GroES system forms a nano-cage that allows encapsulation of the non-native substrate proteins and provides a physical environment optimized to promote and accelerate protein folding. The sequence is that of Chaperonin GroEL 2 from Burkholderia thailandensis (strain ATCC 700388 / DSM 13276 / CCUG 48851 / CIP 106301 / E264).